Here is a 221-residue protein sequence, read N- to C-terminus: Phosphatidylethanolamine-binding protein homolog F40A3.3 (221 aa).

It belongs to the phosphatidylethanolamine-binding protein family.

In Caenorhabditis elegans, this protein is Phosphatidylethanolamine-binding protein homolog F40A3.3.